The sequence spans 78 residues: Acyl carrier protein (78 aa).

The 76-residue stretch at 2–77 (SEIASRVKAI…DAVAYIEEHA (76 aa)) folds into the Carrier domain. S37 carries the post-translational modification O-(pantetheine 4'-phosphoryl)serine.

The protein belongs to the acyl carrier protein (ACP) family. 4'-phosphopantetheine is transferred from CoA to a specific serine of apo-ACP by AcpS. This modification is essential for activity because fatty acids are bound in thioester linkage to the sulfhydryl of the prosthetic group.

Its subcellular location is the cytoplasm. It functions in the pathway lipid metabolism; fatty acid biosynthesis. Its function is as follows. Carrier of the growing fatty acid chain in fatty acid biosynthesis. In Bacteroides fragilis (strain ATCC 25285 / DSM 2151 / CCUG 4856 / JCM 11019 / LMG 10263 / NCTC 9343 / Onslow / VPI 2553 / EN-2), this protein is Acyl carrier protein.